Reading from the N-terminus, the 462-residue chain is MGKEKTHINIVVIGHVDSGKSTTTGHLIYKCGGIDKRTIEKFEKEAAEMGKGSFKYAWVLDKLKAERERGITIDISLWKFETSKYYVTIIDAPGHRDFIKNMITGTSQADCAVLIVAAGVGEFEAGISKNGQTREHALLAYTLGVKQLIVGVNKMDSTEPPYSQKRYEEIVKEVSTYIKKIGYNPDTVAFVPISGWNGDNMLEPSSNMPWFKGWKVTRKDGNASGTTLLEALDCILPPTRPTDKPLRLPLQDVYKIGGIGTVPVGRVETGVLKPGMVVTFAPVNVTTEVKSVEMHHEALSEALPGDNVGFNVKNVSVKDVRRGNVAGDSKNDPPMEAAGFTAQVIILNHPGQISAGYAPVLDCHTAHIACKFAELKEKIDRRSGKKLEDGPKFLKSGDAAIVDMIPGKPMCVESFSDYPPLGRFAVRDMRQTVAVGVIKAVDKKAGGAGKVTKSAQKAQKAK.

Glycine 2 bears the N,N,N-trimethylglycine mark. Residues 5–242 (KTHINIVVIG…DCILPPTRPT (238 aa)) enclose the tr-type G domain. The tract at residues 14–21 (GHVDSGKS) is G1. 14–21 (GHVDSGKS) serves as a coordination point for GTP. The G2 stretch occupies residues 70-74 (GITID). A G3 region spans residues 91–94 (DAPG). Residues 153–156 (NKMD) and 194–196 (SGW) each bind GTP. Residues 153–156 (NKMD) are G4. Residues 194 to 196 (SGW) are G5. 5-glutamyl glycerylphosphorylethanolamine occurs at positions 301 and 374.

This sequence belongs to the TRAFAC class translation factor GTPase superfamily. Classic translation factor GTPase family. EF-Tu/EF-1A subfamily.

Its subcellular location is the cytoplasm. The catalysed reaction is GTP + H2O = GDP + phosphate + H(+). Translation elongation factor that catalyzes the GTP-dependent binding of aminoacyl-tRNA (aa-tRNA) to the A-site of ribosomes during the elongation phase of protein synthesis. Base pairing between the mRNA codon and the aa-tRNA anticodon promotes GTP hydrolysis, releasing the aa-tRNA from EEF1A1 and allowing its accommodation into the ribosome. The growing protein chain is subsequently transferred from the P-site peptidyl tRNA to the A-site aa-tRNA, extending it by one amino acid through ribosome-catalyzed peptide bond formation. The sequence is that of Elongation factor 1-alpha 1 (EEF1A) from Gallus gallus (Chicken).